The following is a 39-amino-acid chain: Photosystem II reaction center protein L (39 aa).

A helical membrane pass occupies residues 18-38; the sequence is SLYLGLLIVFTTGILFSSYFF.

This sequence belongs to the PsbL family. In terms of assembly, PSII is composed of 1 copy each of membrane proteins PsbA, PsbB, PsbC, PsbD, PsbE, PsbF, PsbH, PsbI, PsbJ, PsbK, PsbL, PsbM, PsbT, PsbX, PsbY, PsbZ, Psb30/Ycf12, peripheral proteins PsbO, CyanoQ (PsbQ), PsbU, PsbV and a large number of cofactors. It forms dimeric complexes.

It localises to the cellular thylakoid membrane. Functionally, one of the components of the core complex of photosystem II (PSII). PSII is a light-driven water:plastoquinone oxidoreductase that uses light energy to abstract electrons from H(2)O, generating O(2) and a proton gradient subsequently used for ATP formation. It consists of a core antenna complex that captures photons, and an electron transfer chain that converts photonic excitation into a charge separation. This subunit is found at the monomer-monomer interface and is required for correct PSII assembly and/or dimerization. The sequence is that of Photosystem II reaction center protein L from Synechococcus sp. (strain CC9311).